A 305-amino-acid chain; its full sequence is Tyrosine recombinase XerC (305 aa).

Positions 2 to 88 (NQLELYIDTF…TLRSFYRFLE (87 aa)) constitute a Core-binding (CB) domain. Residues 109–294 (PVPGFLYQEE…TKDHLREAYM (186 aa)) form the Tyr recombinase domain. Residues Arg149, Lys173, His246, Arg249, and His272 contribute to the active site. Tyr281 (O-(3'-phospho-DNA)-tyrosine intermediate) is an active-site residue.

It belongs to the 'phage' integrase family. XerC subfamily. Forms a cyclic heterotetrameric complex composed of two molecules of XerC and two molecules of XerD.

The protein localises to the cytoplasm. Functionally, site-specific tyrosine recombinase, which acts by catalyzing the cutting and rejoining of the recombining DNA molecules. The XerC-XerD complex is essential to convert dimers of the bacterial chromosome into monomers to permit their segregation at cell division. It also contributes to the segregational stability of plasmids. This is Tyrosine recombinase XerC from Oceanobacillus iheyensis (strain DSM 14371 / CIP 107618 / JCM 11309 / KCTC 3954 / HTE831).